A 141-amino-acid chain; its full sequence is MNRRKSREVAMRLLFQTTLNGENLEEALENLKDVRESEDKEKDYESVDLKDVDIDYVKRIIKGIEKNKEEIDGKIKGNLKNWKIERLSKVDLSILRLCTYELKFEEDIPKRVSVNEAIELAKKYSGEKSATFINGVLGKMI.

It belongs to the NusB family.

Its function is as follows. Involved in transcription antitermination. Required for transcription of ribosomal RNA (rRNA) genes. Binds specifically to the boxA antiterminator sequence of the ribosomal RNA (rrn) operons. This chain is Transcription antitermination protein NusB, found in Clostridium botulinum (strain Loch Maree / Type A3).